We begin with the raw amino-acid sequence, 1401 residues long: Condensin complex subunit 1 (1401 aa).

Residues 1 to 603 (MAPQMYEFHL…TVCKNKPNMS (603 aa)) are interactions with SMC2 and SMC4. Phosphoserine occurs at positions 20 and 585. A compositionally biased stretch (polar residues) spans 576–596 (STQEKNPRESTGNMVTGQTVC). Disordered regions lie at residues 576-611 (STQE…SRGN), 956-978 (REEQ…TTME), and 1303-1401 (LEIG…RHRS). Residues 956-971 (REEQEHKTKDPKEKNT) show a composition bias toward basic and acidic residues. The segment covering 1308–1336 (AGSQRAPSAKKPSTGSRYQPLASTASDND) has biased composition (polar residues). Phosphoserine occurs at positions 1310, 1315, and 1330. At Thr-1331 the chain carries Phosphothreonine. Residue Ser-1333 is modified to Phosphoserine. Residue Thr-1339 is modified to Phosphothreonine. The Bipartite nuclear localization signal signature appears at 1342-1362 (PRRTTRRHPNTQQRASKKKPK). A compositionally biased stretch (basic residues) spans 1345 to 1362 (TTRRHPNTQQRASKKKPK). A phosphoserine mark is found at Ser-1366, Ser-1367, Ser-1370, Ser-1371, and Ser-1376. The span at 1369–1382 (ESSEEDLSAEMTED) shows a compositional bias: acidic residues. 2 positions are modified to phosphothreonine; by CDK1: Thr-1384 and Thr-1389. Ser-1395 is subject to Phosphoserine.

The protein belongs to the CND1 (condensin subunit 1) family. As to quaternary structure, component of the condensin complex, which contains the SMC2 and SMC4 heterodimer, and three non SMC subunits that probably regulate the complex: NCAPH/BRRN1, NCAPD2/CAPD2 and NCAPG. Interacts with histones H1 and H3. Post-translationally, phosphorylated by CDK1. Its phosphorylation, as well as that of NCAPH and NCAPG subunits, activates the condensin complex and is required for chromosome condensation.

The protein localises to the nucleus. It localises to the cytoplasm. The protein resides in the chromosome. Regulatory subunit of the condensin complex, a complex required for conversion of interphase chromatin into mitotic-like condense chromosomes. The condensin complex probably introduces positive supercoils into relaxed DNA in the presence of type I topoisomerases and converts nicked DNA into positive knotted forms in the presence of type II topoisomerases. May target the condensin complex to DNA via its C-terminal domain. May promote the resolution of double-strand DNA catenanes (intertwines) between sister chromatids. Condensin-mediated compaction likely increases tension in catenated sister chromatids, providing directionality for type II topoisomerase-mediated strand exchanges toward chromatid decatenation. Required for decatenation of non-centromeric ultrafine DNA bridges during anaphase. Early in neurogenesis, may play an essential role to ensure accurate mitotic chromosome condensation in neuron stem cells, ultimately affecting neuron pool and cortex size. The protein is Condensin complex subunit 1 of Homo sapiens (Human).